The primary structure comprises 765 residues: Myotubularin-related protein 10-A (765 aa).

The Myotubularin phosphatase domain occupies 209-650 (FETYSDWDRE…THIKLWKLCY (442 aa)).

The protein belongs to the protein-tyrosine phosphatase family. Non-receptor class myotubularin subfamily.

The sequence is that of Myotubularin-related protein 10-A (mtmr10-a) from Xenopus laevis (African clawed frog).